We begin with the raw amino-acid sequence, 354 residues long: Ferredoxin--NADP reductase (354 aa).

Residues Asp-42, Gln-50, Tyr-55, Ile-95, Phe-130, Asp-299, and Thr-339 each coordinate FAD.

This sequence belongs to the ferredoxin--NADP reductase type 2 family. In terms of assembly, homodimer. The cofactor is FAD.

It carries out the reaction 2 reduced [2Fe-2S]-[ferredoxin] + NADP(+) + H(+) = 2 oxidized [2Fe-2S]-[ferredoxin] + NADPH. The protein is Ferredoxin--NADP reductase of Acidovorax sp. (strain JS42).